A 389-amino-acid polypeptide reads, in one-letter code: MTGSLLDQLRQMTIVVADTGDIQAIEQFTPRDATTNPSLITAAAQMPQYQQIVDDTLKQARAELGPEAKAAAVATLAFDRLAVAFGLKILAIVPGRVSTEVDARLSYDTEATIEKGRSLIAQYEAAGISRERVLIKIASTWEGIRAAEILEDEGIHCNLTLLFGVHQAIACAEAGVTLISPFVGRILDWYKKETGRDYEPHEDPGVVSVTTIYNYYKKFGYQTQVMGASFRNIGEIVELAGCDLLTISPKLLEQLQATDAELVRKLDPDQAAGLEIEKIDMDQATFEKRHAEDRMASEKLDEGIKGFTNALVALEKLLADRLARLEGEVALNQAFESIFRTFDLDGDGFITREEWMGTDAVFDAIDLNHDGKITAEELGAGIGAVSKLA.

The Schiff-base intermediate with substrate role is filled by Lys136. EF-hand domains follow at residues 330–365 (ALNQ…FDAI) and 365–388 (IDLN…VSKL). The Ca(2+) site is built by Asp343, Asp345, Asp347, Glu354, Asp366, Asn368, Asp370, Lys372, and Glu377.

Belongs to the transaldolase family. Type 1 subfamily.

Its subcellular location is the cytoplasm. The enzyme catalyses D-sedoheptulose 7-phosphate + D-glyceraldehyde 3-phosphate = D-erythrose 4-phosphate + beta-D-fructose 6-phosphate. Its pathway is carbohydrate degradation; pentose phosphate pathway; D-glyceraldehyde 3-phosphate and beta-D-fructose 6-phosphate from D-ribose 5-phosphate and D-xylulose 5-phosphate (non-oxidative stage): step 2/3. Transaldolase is important for the balance of metabolites in the pentose-phosphate pathway. This Gloeobacter violaceus (strain ATCC 29082 / PCC 7421) protein is Transaldolase.